The following is a 53-amino-acid chain: Lectin alpha chain (53 aa).

Belongs to the leguminous lectin family. In terms of assembly, tetramer of two alpha and two beta chains.

This chain is Lectin alpha chain, found in Lathyrus clymenum (Spanish vetchling).